A 3010-amino-acid polypeptide reads, in one-letter code: Genome polyprotein (3010 aa).

Ser2 is modified (N-acetylserine; by host). An interaction with STAT1 region spans residues 2–23; the sequence is STNPKPQRKTKRNTNRRPQDVK. The interval 2–58 is interaction with EIF2AK2/PKR; that stretch reads STNPKPQRKTKRNTNRRPQDVKFPGGGQIVGGVYLLPRRGPRLGVRATRKASERSQP. The tract at residues 2 to 59 is interaction with DDX3X; the sequence is STNPKPQRKTKRNTNRRPQDVKFPGGGQIVGGVYLLPRRGPRLGVRATRKASERSQPR. Residues 2–75 form a disordered region; the sequence is STNPKPQRKT…PKARRPEGRA (74 aa). At 2–168 the chain is on the cytoplasmic side; sequence STNPKPQRKT…EDGVNYATGN (167 aa). Short sequence motifs (nuclear localization signal) lie at residues 5 to 13 and 38 to 43; these read PKPQRKTKR and PRRGPR. A compositionally biased stretch (basic residues) spans 7–16; sequence PQRKTKRNTN. Residues 32-47 are compositionally biased toward low complexity; the sequence is GGVYLLPRRGPRLGVR. Ser53 bears the Phosphoserine; by host mark. 2 short sequence motifs (nuclear localization signal) span residues 58–64 and 66–71; these read PRGRRQP and PKARRP. Basic residues predominate over residues 58-68; sequence PRGRRQPIPKA. Residue Ser99 is modified to Phosphoserine; by host. The tract at residues 112-152 is important for endoplasmic reticulum and mitochondrial localization; that stretch reads PRRRSRNLGKVIDTLTCGFADLMGYIPLVGAPLGGAARALA. At Ser116 the chain carries Phosphoserine; by host PKA. The interaction with APOA2 stretch occupies residues 122-173; that stretch reads VIDTLTCGFADLMGYIPLVGAPLGGAARALAHGVRVLEDGVNYATGNLPGCS. The segment at 164–167 is important for lipid droplets localization; that stretch reads YATG. Residues 169 to 189 traverse the membrane as a helical segment; the sequence is LPGCSFSIFLLALLSCLTIPA. Residues 178–191 constitute a propeptide, ER anchor for the core protein, removed in mature form by host signal peptidase; the sequence is LLALLSCLTIPASA. Topologically, residues 190-358 are lumenal; it reads SAYEVRNVSG…AGAHWGVLAG (169 aa). N-linked (GlcNAc...) asparagine; by host glycosylation is found at Asn196, Asn209, Asn234, and Asn250. The important for fusion stretch occupies residues 265 to 296; sequence LVGTAAFCSAMYVGDLCGSIFLVSQLFTFSPR. The N-linked (GlcNAc...) asparagine; by host glycan is linked to Asn305. Residues 359–379 form a helical membrane-spanning segment; that stretch reads LAYYSMVGNWAKVLIVALLFA. The Lumenal segment spans residues 380–725; the sequence is GVDGETHTTG…WEYILLLFLL (346 aa). The HVR1 stretch occupies residues 385-411; that stretch reads THTTGRVAGHTTSGFTSLFSSGASQKI. Asn417, Asn423, Asn430, and Asn448 each carry an N-linked (GlcNAc...) (high mannose) asparagine; by host glycan. 4 cysteine pairs are disulfide-bonded: Cys429–Cys552, Cys452–Cys459, Cys486–Cys494, and Cys503–Cys508. The segment at 474-479 is HVR2; that stretch reads YTKPNS. Asn478 is a glycosylation site (N-linked (GlcNAc...) asparagine; by host). A CD81-binding 1 region spans residues 480–493; sequence SDQRPYCWHYAPRP. Asn532 carries an N-linked (GlcNAc...) (high mannose) asparagine; by host glycan. Asn540 carries N-linked (GlcNAc...) asparagine; by host glycosylation. The CD81-binding 2 stretch occupies residues 544–551; the sequence is PPQGNWFG. Asn556 carries an N-linked (GlcNAc...) (high mannose) asparagine; by host glycan. A disulfide bridge links Cys564 with Cys569. N-linked (GlcNAc...) (high mannose) asparagine; by host glycosylation occurs at Asn576. 3 cysteine pairs are disulfide-bonded: Cys581–Cys585, Cys597–Cys620, and Cys607–Cys644. Asn623 and Asn645 each carry an N-linked (GlcNAc...) (high mannose) asparagine; by host glycan. Cys652 and Cys677 are joined by a disulfide. The interval 660 to 671 is PKR/eIF2-alpha phosphorylation homology domain (PePHD); sequence SELSPLLLSTTE. A helical transmembrane segment spans residues 726 to 746; it reads LADARVCACLWMMLLIAQAEA. At 747–757 the chain is on the lumenal side; the sequence is ALENLVVLNAA. A helical transmembrane segment spans residues 758–778; sequence SVAGAHGILSFLVFFCAAWYI. At 779–781 the chain is on the cytoplasmic side; sequence KGR. The helical transmembrane segment at 782 to 803 threads the bilayer; that stretch reads LAPGAAYAFYGVWPLLLLLLAL. The Lumenal segment spans residues 804–813; it reads PPRAYALDRE. Residues 814–834 traverse the membrane as a helical segment; the sequence is MAASCGGAVLVGLVFLTLSPY. Residues 835-838 lie on the Cytoplasmic side of the membrane; the sequence is YKVF. A helical transmembrane segment spans residues 839–859; it reads LTRLIWWLQYFITRAEAHMQV. Residues 860–881 are Lumenal-facing; that stretch reads WVPPLNVRGGRDAIILLTCAVH. Residues 882-902 traverse the membrane as a helical segment; it reads PELIFDITKLLLAILGPLMVL. The 124-residue stretch at 903–1026 folds into the Peptidase C18 domain; that stretch reads QAGITRVPYF…SLEGQGWRLL (124 aa). Over 903–1657 the chain is Cytoplasmic; it reads QAGITRVPYF…CMSADLEVVT (755 aa). The interval 904–1206 is protease NS2-3; sequence AGITRVPYFV…PVESMETTMR (303 aa). Cys922 carries the S-palmitoyl cysteine; by host lipid modification. Residues 929–949 are interaction with host SCPS1; that stretch reads AGGHYVQMAFMKLGALTGTYV. Active-site for protease NS2 activity; shared with dimeric partner residues include His952, Glu972, and Cys993. Positions 1027–1208 constitute a Peptidase S29 domain; sequence APITAYSQQT…ESMETTMRSP (182 aa). Active-site charge relay system; for serine protease NS3 activity residues include His1083 and Asp1107. 2 residues coordinate Zn(2+): Cys1123 and Cys1125. Ser1165 functions as the Charge relay system; for serine protease NS3 activity in the catalytic mechanism. Cys1171 and His1175 together coordinate Zn(2+). One can recognise a Helicase ATP-binding domain in the interval 1217 to 1369; the sequence is PAVPQTFQVA…PNIEEIGLSN (153 aa). 1230–1237 provides a ligand contact to ATP; the sequence is APTGSGKS. Mg(2+)-binding residues include Ser1237 and Glu1317. Residues 1316–1319 carry the DECH box motif; the sequence is DECH. Positions 1486 to 1497 are RNA-binding; sequence QRRGRTGRGRSG. A helical membrane pass occupies residues 1658-1678; sequence STWVLVGGVLAALAAYCLTTG. The tract at residues 1679-1690 is NS3-binding; it reads SVVIVGRIILSG. The Cytoplasmic portion of the chain corresponds to 1679-1805; the sequence is SVVIVGRIIL…SITSPLTTQN (127 aa). The helical transmembrane segment at 1806–1824 threads the bilayer; sequence TLLFNILGGWVAAQLAPPS. The Lumenal segment spans residues 1825 to 1828; sequence AASA. Residues 1829–1849 traverse the membrane as a helical segment; it reads FVGAGIAGAAVGSIGLGKVLV. Asp1850 is a topological domain (cytoplasmic). The chain crosses the membrane as a helical span at residues 1851–1871; it reads ILAGYGAGVAGALVAFKVMSG. Over 1872–1881 the chain is Lumenal; it reads EVPSTEDLVN. The chain crosses the membrane as a helical span at residues 1882 to 1902; sequence LLPAILSPGALVVGVVCAAIL. Over 1903 to 1972 the chain is Cytoplasmic; that stretch reads RRHVGPGEGA…WINEDCSTPC (70 aa). S-palmitoyl cysteine; by host attachment occurs at residues Cys1968 and Cys1972. Residues 1973–2002 lie within the membrane without spanning it; that stretch reads SGSWLRDVWDWICTVLTDFKTWLQSKLLPR. The Cytoplasmic segment spans residues 2003 to 2989; it reads LPGVPFLSCQ…YHSLSRARPR (987 aa). Cys2011, Cys2029, Cys2031, and Cys2052 together coordinate Zn(2+). The tract at residues 2120 to 2208 is FKBP8-binding; it reads EFFTEVDGVR…ASSSASQLSA (89 aa). Positions 2120-2332 are transcriptional activation; it reads EFFTEVDGVR…PIPPPRRKRT (213 aa). Residues 2135-2139 form an interaction with non-structural protein 4A region; the sequence is PACKP. The disordered stretch occupies residues 2187–2219; it reads KRRLARGSPPSLASSSASQLSAPSLKATCTTHH. The segment at 2189-2441 is interaction with host SKP2; that stretch reads RLARGSPPSL…PCAAEESKLP (253 aa). Ser2194 carries the post-translational modification Phosphoserine; by host; in p56. Positions 2194-2211 are enriched in low complexity; it reads SPPSLASSSASQLSAPSL. Phosphoserine; by host; in p58 is present on residues Ser2197, Ser2201, Ser2204, Ser2207, and Ser2210. The interval 2210–2249 is ISDR; the sequence is SLKATCTTHHDSPDADLIEANLLWRQEMGGNITRVESENK. Residues 2210 to 2275 are interaction with EIF2AK2/PKR; it reads SLKATCTTHH…REISVAAEIL (66 aa). The interval 2249 to 2306 is NS4B-binding; it reads KVVILDSFEPLHAEGDEREISVAAEILRKSRKFPSALPIWARPDYNPPLLESWKDPDY. Positions 2322–2325 match the SH3-binding motif; it reads PPIP. The Nuclear localization signal signature appears at 2326-2334; the sequence is PPRRKRTVV. Lys2350 participates in a covalent cross-link: Glycyl lysine isopeptide (Lys-Gly) (interchain with G-Cter in ubiquitin). Residues 2351–2365 show a composition bias toward polar residues; the sequence is TFGSSGSSAVDSGTA. Residues 2351-2407 form a disordered region; sequence TFGSSGSSAVDSGTATALPDLASDDGDKGSDVESYSSMPPLEGEPGDPDLSDGSWST. The V3 stretch occupies residues 2354-2377; that stretch reads SSGSSAVDSGTATALPDLASDDGD. Residues Ser2448 and Ser2461 each carry the phosphoserine; by host modification. One can recognise a RdRp catalytic domain in the interval 2633–2751; sequence PMGFSYDTRC…ICESAGTQED (119 aa). Positions 2639, 2737, and 2738 each coordinate Mg(2+). A helical membrane pass occupies residues 2990 to 3010; the sequence is WFPLCLLLLSVGVGIYLLPNR.

Belongs to the hepacivirus polyprotein family. As to quaternary structure, homooligomer. Interacts with E1 (via C-terminus). Interacts with the non-structural protein 5A. Interacts (via N-terminus) with host STAT1 (via SH2 domain); this interaction results in decreased STAT1 phosphorylation and ubiquitin-mediated proteasome-dependent STAT1 degradation, leading to decreased IFN-stimulated gene transcription. Interacts with host STAT3; this interaction constitutively activates STAT3. Interacts with host LTBR receptor. Interacts with host TNFRSF1A receptor and possibly induces apoptosis. Interacts with host HNRPK. Interacts with host YWHAE. Interacts with host UBE3A/E6AP. Interacts with host DDX3X. Interacts with host APOA2. Interacts with host RXRA protein. Interacts with host SP110 isoform 3/Sp110b; this interaction sequesters the transcriptional corepressor SP110 away from the nucleus. Interacts with host CREB3 nuclear transcription protein; this interaction triggers cell transformation. Interacts with host ACY3. Interacts with host C1QR1. Interacts with host RBM24; this interaction, which enhances the interaction of the mature core protein with 5'-UTR, may inhibit viral translation and favor replication. Interacts with host EIF2AK2/PKR; this interaction induces the autophosphorylation of EIF2AK2. Part of the viral assembly initiation complex composed of NS2, E1, E2, NS3, NS4A, NS5A and the mature core protein. In terms of assembly, forms a heterodimer with envelope glycoprotein E2. Interacts with mature core protein. Interacts with protease NS2. The heterodimer E1/E2 interacts with host CLDN1; this interaction plays a role in viral entry into host cell. Interacts with host SPSB2 (via C-terminus). Part of the viral assembly initiation complex composed of NS2, E1, E2, NS3, NS4A, NS5A and the mature core protein. Interacts with host NEURL3; this interaction prevents E1 binding to glycoprotein E2. Forms a heterodimer with envelope glycoprotein E1. Interacts with host CD81 and SCARB1 receptors; these interactions play a role in viral entry into host cell. Interacts with host EIF2AK2/PKR; this interaction inhibits EIF2AK2 and probably allows the virus to evade the innate immune response. Interacts with host CD209/DC-SIGN and CLEC4M/DC-SIGNR. Interact with host SPCS1; this interaction is essential for viral particle assembly. Interacts with protease NS2. The heterodimer E1/E2 interacts with host CLDN1; this interaction plays a role in viral entry into host cell. Part of the viral assembly initiation complex composed of NS2, E1, E2, NS3, NS4A, NS5A and the mature core protein. Interacts with host SLC3A2/4F2hc; the interaction may facilitate viral entry into host cell. Interacts with human PLSCR1. As to quaternary structure, homohexamer. Homoheptamer. Interacts with protease NS2. In terms of assembly, homodimer. Interacts with host SPCS1; this interaction is essential for viral particle assembly. Interacts with envelope glycoprotein E1. Interacts with envelope glycoprotein E2. Interacts with viroporin p7. Interacts with serine protease/helicase NS3. Part of the replication complex composed of NS2, NS3, NS4A, NS4B, NS5A and the RNA-directed RNA polymerase embedded in an ER-derived membranous web. Part of the viral assembly initiation complex composed of NS2, E1, E2, NS3, NS4A, NS5A and the mature core protein. Interacts with protease NS2. Interacts with non-structural protein 4A; this interaction stabilizes the folding of NS3 serine protease. NS3-NS4A interaction is essential for NS3 activation and allows membrane anchorage of the latter. NS3/NS4A complex also prevents phosphorylation of host IRF3, thus preventing the establishment of dsRNA induced antiviral state. Interacts with host MAVS; this interaction leads to the cleavage and inhibition of host MAVS. Interacts with host TICAM1; this interaction leads to the cleavage and inhibition of host TICAM1. Interacts with host TANK-binding kinase/TBK1; this interaction results in the inhibition of the association between TBK1 and IRF3, which leads to the inhibition of IRF3 activation. Interacts with host RBM24. Part of the replication complex composed of NS2, NS3, NS4A, NS4B, NS5A and the RNA-directed RNA polymerase embedded in an ER-derived membranous web. Part of the viral assembly initiation complex composed of NS2, E1, E2, NS3, NS4A, NS5A and the mature core protein. As to quaternary structure, interacts with NS3 serine protease; this interaction stabilizes the folding of NS3 serine protease. NS3-NS4A interaction is essential for NS3 activation and allows membrane anchorage of the latter. Interacts with non-structural protein 5A (via N-terminus). Part of the replication complex composed of NS2, NS3, NS4A, NS4B, NS5A and the RNA-directed RNA polymerase embedded in an ER-derived membranous web. Part of the viral assembly initiation complex composed of NS2, E1, E2, NS3, NS4A, NS5A and the mature core protein. In terms of assembly, homomultimer. Interacts with non-structural protein NS5A. Interacts with host PLA2G4C; this interaction likely initiates the recruitment of replication complexes to lipid droplets. Interacts with host STING; this interaction disrupts the interaction between STING and TBK1 thereby suppressing the interferon signaling. Part of the replication complex composed of NS2, NS3, NS4A, NS4B, NS5A and the RNA-directed RNA polymerase embedded in an ER-derived membranous web. Monomer. Homodimer; dimerization is required for RNA-binding. Interacts with the mature core protein. Interacts (via N-terminus) with non-structural protein 4A. Interacts with non-structural protein 4B. Interacts (via region D2) with RNA-directed RNA polymerase. Part of the viral assembly initiation complex composed of NS2, E1, E2, NS3, NS4A, NS5A and the mature core protein. Part of the replication complex composed of NS2, NS3, NS4A, NS4B, NS5A and the RNA-directed RNA polymerase embedded in an ER-derived membranous web. Interacts with host GRB2. Interacts with host BIN1. Interacts with host PIK3R1. Interacts with host SRCAP. Interacts with host FKBP8. Interacts (via C-terminus) with host VAPB (via MSP domain). Interacts with host EIF2AK2/PKR; this interaction leads to disruption of EIF2AK2 dimerization by NS5A and probably allows the virus to evade the innate immune response. Interacts (via N-terminus) with host PACSIN2 (via N-terminus); this interaction attenuates protein kinase C alpha-mediated phosphorylation of PACSIN2 by disrupting the interaction between PACSIN2 and PRKCA. Interacts (via N-terminus) with host SRC kinase (via SH2 domain). Interacts with most Src-family kinases. Interacts with host IFI27 and SKP2; promotes the ubiquitin-mediated proteasomal degradation of NS5A. Interacts with host GPS2. Interacts with host TNFRSF21; this interaction allows the modulation by the virus of JNK, p38 MAPK, STAT3, and Akt signaling pathways in a DR6-dependent manner. Interacts (via N-terminus) with host CIDEB (via N-terminus); this interaction seems to regulate the association of HCV particles with APOE. Interacts with host CHKA/Choline Kinase-alpha; CHKA bridges host PI4KA and NS5A and potentiates NS5A-stimulated PI4KA activity, which then facilitates the targeting of the ternary complex to the ER for viral replication. Interacts with host SPSB2 (via C-terminus); this interaction targets NS5A for ubiquitination and degradation. Interacts with host RAB18; this interaction may promote the association of NS5A and other replicase components with lipid droplets. Interacts (via region D2) with host PPIA/CYPA; the interaction stimulates RNA-binding ability of NS5A and is dependent on the peptidyl-prolyl cis-trans isomerase activity of PPIA/CYPA. Interacts with host TRIM14; this interaction induces the degradation of NS5A. As to quaternary structure, homooligomer. Interacts with non-structural protein 5A. Interacts with host VAPB. Interacts with host PRK2/PKN2. Interacts with host HNRNPA1 and SEPT6; these interactions facilitate viral replication. Part of the replication complex composed of NS2, NS3, NS4A, NS4B, NS5A and the RNA-directed RNA polymerase. Zn(2+) is required as a cofactor. Mg(2+) serves as cofactor. Post-translationally, specific enzymatic cleavages in vivo yield mature proteins. The structural proteins, core, E1, E2 and p7 are produced by proteolytic processing by host signal peptidases. The core protein precursor is synthesized as a 23 kDa, which is retained in the ER membrane through the hydrophobic signal peptide. Cleavage by the signal peptidase releases the 21 kDa mature core protein. The cleavage of the core protein precursor occurs between aminoacids 176 and 188 but the exact cleavage site is not known. Some degraded forms of the core protein appear as well during the course of infection. The other proteins (p7, NS2, NS3, NS4A, NS4B, NS5A and NS5B) are cleaved by the viral proteases. Autoprocessing between NS2 and NS3 is mediated by the NS2 cysteine protease catalytic domain and regulated by the NS3 N-terminal domain. Phosphorylated by host PKC and PKA. In terms of processing, ubiquitinated; mediated by UBE3A and leading to core protein subsequent proteasomal degradation. Post-translationally, highly N-glycosylated. Palmitoylation is required for NS2/3 autoprocessing and E2 recruitment to membranes. In terms of processing, palmitoylated. This modification may play a role in its polymerization or in protein-protein interactions. Post-translationally, phosphorylated on serines in a basal form termed p56. p58 is a hyperphosphorylated form of p56. p56 and p58 coexist in the cell in roughly equivalent amounts. Hyperphosphorylation is dependent on the presence of NS4A. Host CSNK1A1/CKI-alpha or RPS6KB1 kinases may be responsible for NS5A phosphorylation. Tyrosine phosphorylation is essential for the interaction with host SRC. In terms of processing, the N-terminus is phosphorylated by host PRK2/PKN2.

It is found in the host endoplasmic reticulum membrane. The protein localises to the host mitochondrion membrane. It localises to the virion. The protein resides in the host cytoplasm. Its subcellular location is the host nucleus. It is found in the host lipid droplet. The protein localises to the virion membrane. It localises to the host mitochondrion. The protein resides in the host cell membrane. Its subcellular location is the host perinuclear region. It catalyses the reaction Hydrolysis of four peptide bonds in the viral precursor polyprotein, commonly with Asp or Glu in the P6 position, Cys or Thr in P1 and Ser or Ala in P1'.. The enzyme catalyses a ribonucleoside 5'-triphosphate + H2O = a ribonucleoside 5'-diphosphate + phosphate + H(+). It carries out the reaction ATP + H2O = ADP + phosphate + H(+). The catalysed reaction is RNA(n) + a ribonucleoside 5'-triphosphate = RNA(n+1) + diphosphate. Its activity is regulated as follows. Inhibited by the antiviral drug hexamethylene amiloride. Inhibited by amantadine. Inhibition by amantadine appears to be genotype-dependent. Also inhibited by long-alkyl-chain iminosugar derivatives. Activity is up-regulated by PRK2/PKN2-mediated phosphorylation. Functionally, packages viral RNA to form a viral nucleocapsid, and promotes virion budding. Participates in the viral particle production as a result of its interaction with the non-structural protein 5A. Binds RNA and may function as a RNA chaperone to induce the RNA structural rearrangements taking place during virus replication. Modulates viral translation initiation by interacting with viral IRES and 40S ribosomal subunit. Affects various cell signaling pathways, host immunity and lipid metabolism. Prevents the establishment of cellular antiviral state by blocking the interferon-alpha/beta (IFN-alpha/beta) and IFN-gamma signaling pathways and by blocking the formation of phosphorylated STAT1 and promoting ubiquitin-mediated proteasome-dependent degradation of STAT1. Activates STAT3 leading to cellular transformation. Regulates the activity of cellular genes, including c-myc and c-fos. May repress the promoter of p53, and sequester CREB3 and SP110 isoform 3/Sp110b in the cytoplasm. Represses cell cycle negative regulating factor CDKN1A, thereby interrupting an important check point of normal cell cycle regulation. Targets transcription factors involved in the regulation of inflammatory responses and in the immune response: suppresses TNF-induced NF-kappa-B activation, and activates AP-1. Binds to dendritic cells (DCs) via C1QR1, resulting in down-regulation of T-lymphocytes proliferation. Alters lipid metabolism by interacting with hepatocellular proteins involved in lipid accumulation and storage. Induces up-regulation of FAS promoter activity, and thereby contributes to the increased triglyceride accumulation in hepatocytes (steatosis). Forms a heterodimer with envelope glycoprotein E2, which mediates virus attachment to the host cell, virion internalization through clathrin-dependent endocytosis and fusion with host membrane. Fusion with the host cell is most likely mediated by both E1 and E2, through conformational rearrangements of the heterodimer required for fusion rather than a classical class II fusion mechanism. E1/E2 heterodimer binds host apolipoproteins such as APOB and APOE thereby forming a lipo-viro-particle (LVP). APOE associated to the LVP allows the initial virus attachment to cell surface receptors such as the heparan sulfate proteoglycans (HSPGs), syndecan-1 (SDC1), syndecan-1 (SDC2), the low-density lipoprotein receptor (LDLR) and scavenger receptor class B type I (SCARB1). The cholesterol transfer activity of SCARB1 allows E2 exposure and binding of E2 to SCARB1 and the tetraspanin CD81. E1/E2 heterodimer binding on CD81 activates the epithelial growth factor receptor (EGFR) signaling pathway. Diffusion of the complex E1-E2-EGFR-SCARB1-CD81 to the cell lateral membrane allows further interaction with Claudin 1 (CLDN1) and occludin (OCLN) to finally trigger HCV entry. Its function is as follows. Forms a heterodimer with envelope glycoprotein E1, which mediates virus attachment to the host cell, virion internalization through clathrin-dependent endocytosis and fusion with host membrane. Fusion with the host cell is most likely mediated by both E1 and E2, through conformational rearrangements of the heterodimer required for fusion rather than a classical class II fusion mechanism. The interaction between envelope glycoprotein E2 and host apolipoprotein E/APOE allows the proper assembly, maturation and infectivity of the viral particles. This interaction is probably promoted via the up-regulation of cellular autophagy by the virus. E1/E2 heterodimer binds host apolipoproteins such as APOB and APOE thereby forming a lipo-viro-particle (LVP). APOE associated to the LVP allows the initial virus attachment to cell surface receptors such as the heparan sulfate proteoglycans (HSPGs), syndecan-1 (SDC1), syndecan-1 (SDC2), the low-density lipoprotein receptor (LDLR) and scavenger receptor class B type I (SCARB1). The cholesterol transfer activity of SCARB1 allows E2 exposure and binding of E2 to SCARB1 and the tetraspanin CD81. E1/E2 heterodimer binding on CD81 activates the epithelial growth factor receptor (EGFR) signaling pathway. Diffusion of the complex E1-E2-EGFR-SCARB1-CD81 to the cell lateral membrane allows further interaction with Claudin 1 (CLDN1) and occludin (OCLN) to finally trigger HCV entry. Inhibits host EIF2AK2/PKR activation, preventing the establishment of an antiviral state. Viral ligand for CD209/DC-SIGN and CLEC4M/DC-SIGNR, which are respectively found on dendritic cells (DCs), and on liver sinusoidal endothelial cells and macrophage-like cells of lymph node sinuses. These interactions allow the capture of circulating HCV particles by these cells and subsequent transmission to permissive cells. Capture of circulating HCV particles by these SIGN+ cells may facilitate virus infection of proximal hepatocytes and lymphocyte subpopulations and may be essential for the establishment of persistent infection. In terms of biological role, ion channel protein that acts as a viroporin and plays an essential role in the assembly, envelopment and secretion of viral particles. Regulates the host cell secretory pathway, which induces the intracellular retention of viral glycoproteins and favors assembly of viral particles. Creates a pore in acidic organelles and releases Ca(2+) and H(+) in the cytoplasm of infected cells, leading to a productive viral infection. High levels of cytoplasmic Ca(2+) may trigger membrane trafficking and transport of viral ER-associated proteins to viroplasms, sites of viral genome replication. This ionic imbalance induces the assembly of the inflammasome complex, which triggers the maturation of pro-IL-1beta into IL-1beta through the action of caspase-1. Targets also host mitochondria and induces mitochondrial depolarization. In addition of its role as a viroporin, acts as a lipid raft adhesion factor. Functionally, cysteine protease required for the proteolytic auto-cleavage between the non-structural proteins NS2 and NS3. The N-terminus of NS3 is required for the function of NS2 protease (active region NS2-3). Promotes the initiation of viral particle assembly by mediating the interaction between structural and non-structural proteins. Displays three enzymatic activities: serine protease with a chymotrypsin-like fold, NTPase and RNA helicase. NS3 serine protease, in association with NS4A, is responsible for the cleavages of NS3-NS4A, NS4A-NS4B, NS4B-NS5A and NS5A-NS5B. The NS3/NS4A complex prevents phosphorylation of host IRF3, thus preventing the establishment of dsRNA induced antiviral state. The NS3/NS4A complex induces host amino acid transporter component SLC3A2, thus contributing to HCV propagation. NS3 RNA helicase binds to RNA and unwinds both dsDNA and dsRNA in the 3' to 5' direction, and likely resolves RNA complicated stable secondary structures in the template strand. Binds a single ATP and catalyzes the unzipping of a single base pair of dsRNA. Inhibits host antiviral proteins TBK1 and IRF3 thereby preventing the establishment of an antiviral state. Cleaves host MAVS/CARDIF thereby preventing the establishment of an antiviral state. Cleaves host TICAM1/TRIF, thereby disrupting TLR3 signaling and preventing the establishment of an antiviral state. Its function is as follows. Induces a specific membrane alteration that serves as a scaffold for the virus replication complex. This membrane alteration gives rise to the so-called ER-derived membranous web that contains the replication complex. NS4B self-interaction contributes to its function in membranous web formation. Promotes host TRIF protein degradation in a CASP8-dependent manner thereby inhibiting host TLR3-mediated interferon signaling. Disrupts the interaction between STING and TBK1 contributing to the inhibition of interferon signaling. In terms of biological role, phosphorylated protein that is indispensable for viral replication and assembly. Both hypo- and hyperphosphorylated states are required for the viral life cycle. The hyperphosphorylated form of NS5A is an inhibitor of viral replication. Involved in RNA-binding and especially in binding to the viral genome. Zinc is essential for RNA-binding. Participates in the viral particle production as a result of its interaction with the mature viral core protein. Its interaction with host VAPB may target the viral replication complex to vesicles. Down-regulates viral IRES translation initiation. Mediates interferon resistance, presumably by interacting with and inhibiting host EIF2AK2/PKR. Prevents BIN1-induced apoptosis. Acts as a transcriptional activator of some host genes important for viral replication when localized in the nucleus. Via the interaction with host PACSIN2, modulates lipid droplet formation in order to promote virion assembly. Modulates TNFRSF21/DR6 signaling pathway for viral propagation. Functionally, RNA-dependent RNA polymerase that performs primer-template recognition and RNA synthesis during viral replication. Initiates RNA transcription/replication at a flavin adenine dinucleotide (FAD), resulting in a 5'- FAD cap on viral RNAs. In this way, recognition of viral 5' RNA by host pattern recognition receptors can be bypassed, thereby evading activation of antiviral pathways. In Hepatitis C virus genotype 1b (strain HC-J4) (HCV), this protein is Genome polyprotein.